A 199-amino-acid polypeptide reads, in one-letter code: Chaperone protein TorD (199 aa).

This sequence belongs to the TorD/DmsD family. TorD subfamily.

It localises to the cytoplasm. Its function is as follows. Involved in the biogenesis of TorA. Acts on TorA before the insertion of the molybdenum cofactor and, as a result, probably favors a conformation of the apoenzyme that is competent for acquiring the cofactor. The polypeptide is Chaperone protein TorD (Escherichia coli O45:K1 (strain S88 / ExPEC)).